The sequence spans 102 residues: Synaptobrevin-like protein 5 (102 aa).

Residues K17 to K77 enclose the v-SNARE coiled-coil homology domain.

The chain is Synaptobrevin-like protein 5 (snb-5) from Caenorhabditis elegans.